The primary structure comprises 82 residues: MKNLLKILLIIAFANPVFASSMQMPDPASVTTTQIHAMSTNAQQDWIASLTANQYNMLSPDVQKWVMENTTDAQKQALGINQ.

Positions 1–19 are cleaved as a signal peptide; sequence MKNLLKILLIIAFANPVFA.

This is an uncharacterized protein from Rickettsia prowazekii (strain Madrid E).